Consider the following 224-residue polypeptide: UPF0758 protein PBPRA0202 (224 aa).

The MPN domain occupies 102 to 224 (VLTSPQHTRH…IVSFSEQGWL (123 aa)). Residues His-173, His-175, and Asp-186 each coordinate Zn(2+). The JAMM motif signature appears at 173–186 (HNHPSGVAEPSQSD).

Belongs to the UPF0758 family.

The polypeptide is UPF0758 protein PBPRA0202 (Photobacterium profundum (strain SS9)).